Here is a 199-residue protein sequence, read N- to C-terminus: Putative pseudouridine methyltransferase (199 aa).

Leucine 132 and cysteine 186 together coordinate S-adenosyl-L-methionine.

This sequence belongs to the methyltransferase superfamily. TrmY family.

The protein localises to the cytoplasm. The sequence is that of Putative pseudouridine methyltransferase from Vibrio campbellii (strain ATCC BAA-1116).